The sequence spans 98 residues: NADH-ubiquinone oxidoreductase chain 4L (98 aa).

3 consecutive transmembrane segments (helical) span residues 1-21, 29-49, and 61-81; these read MSMV…GLLM, SLLC…MTIL, and IILL…LVMV.

It belongs to the complex I subunit 4L family. Core subunit of respiratory chain NADH dehydrogenase (Complex I) which is composed of 45 different subunits.

The protein resides in the mitochondrion inner membrane. The enzyme catalyses a ubiquinone + NADH + 5 H(+)(in) = a ubiquinol + NAD(+) + 4 H(+)(out). In terms of biological role, core subunit of the mitochondrial membrane respiratory chain NADH dehydrogenase (Complex I) which catalyzes electron transfer from NADH through the respiratory chain, using ubiquinone as an electron acceptor. Part of the enzyme membrane arm which is embedded in the lipid bilayer and involved in proton translocation. The chain is NADH-ubiquinone oxidoreductase chain 4L (MT-ND4L) from Arctocephalus australis (South American fur seal).